Here is a 144-residue protein sequence, read N- to C-terminus: Hemoglobin embryonic subunit alpha (144 aa).

In terms of domain architecture, Globin spans 3–144 (SLSAKDKDVV…LALALAEKYR (142 aa)). His61 serves as a coordination point for O2. Position 90 (His90) interacts with heme b.

Belongs to the globin family. Heterotetramer of two alpha chains and two beta chains. In terms of tissue distribution, red blood cells.

In terms of biological role, involved in oxygen transport from gills to the various peripheral tissues. This Oryzias latipes (Japanese rice fish) protein is Hemoglobin embryonic subunit alpha.